The chain runs to 1553 residues: ABC-type transporter cctS (1553 aa).

The next 4 helical transmembrane spans lie at 27–47 (LIPL…YFHA), 90–110 (LEVA…IFSG), 114–134 (DLTS…ILFV), and 151–171 (SVLY…AILG). N-linked (GlcNAc...) asparagine glycosylation occurs at Asn176. Transmembrane regions (helical) follow at residues 177 to 197 (FTIA…FHWT), 286 to 306 (LLWQ…PPVL), 324 to 344 (TAWL…VAGC), 413 to 433 (GYLY…TYLL), and 438 to 458 (GISG…NILI). Residues 293 to 582 (ATLNSFAVFV…IADAITFLLR (290 aa)) enclose the ABC transmembrane type-1 1 domain. Asn524 carries an N-linked (GlcNAc...) asparagine glycan. The next 2 helical transmembrane spans lie at 527–547 (TFFS…TVVW) and 550–570 (SMGT…RIPF). The N-linked (GlcNAc...) asparagine glycan is linked to Asn617. An ABC transporter 1 domain is found at 635–874 (NKRSDIQLTE…GRIDADIMQN (240 aa)). Residue 670–677 (GPSGSGKS) participates in ATP binding. N-linked (GlcNAc...) asparagine glycosylation occurs at Asn725. A helical transmembrane segment spans residues 948 to 970 (WYWVLVLFMFGIQQFISLATNIW). In terms of domain architecture, ABC transmembrane type-1 2 spans 951 to 1255 (VLVLFMFGIQ…FVQLYAIVQQ (305 aa)). Asn992 carries N-linked (GlcNAc...) asparagine glycosylation. Residues 1017–1037 (IYVAICLAYAFFTFARDLIVF) traverse the membrane as a helical segment. Asn1085 carries an N-linked (GlcNAc...) asparagine glycan. A run of 4 helical transmembrane segments spans residues 1086–1108 (ISTF…VFIS), 1113–1135 (AFLI…FING), 1204–1224 (FLGS…LESV), and 1229–1249 (AALV…FVQL). Residues 1294-1533 (VRFDAYTTRY…DDDGIFRRLC (240 aa)) form the ABC transporter 2 domain. Residue 1328–1335 (GRTGAGKS) participates in ATP binding.

It belongs to the ABC transporter superfamily.

It is found in the membrane. It functions in the pathway mycotoxin biosynthesis. In terms of biological role, ABC-type transporter; part of the gene cluster that mediates the biosynthesis of the mycotoxin cyclochlorotine, a hepatotoxic and carcinogenic cyclic chlorinated pentapeptide. CctS is essential for the biosynthesis of cyclochlorotine, maybe as a chloride channel that supplies chloride for chlorination by cctP2. The sequence is that of ABC-type transporter cctS from Talaromyces islandicus (Penicillium islandicum).